Here is a 65-residue protein sequence, read N- to C-terminus: Small ribosomal subunit protein eS27 (65 aa).

Zn(2+) contacts are provided by Cys-20, Cys-23, Cys-39, and Cys-42. The segment at 20–42 (CIDCGNEQIVFSHPATPVRCLVC) adopts a C4-type zinc-finger fold.

The protein belongs to the eukaryotic ribosomal protein eS27 family. As to quaternary structure, part of the 30S ribosomal subunit. It depends on Zn(2+) as a cofactor.

This chain is Small ribosomal subunit protein eS27, found in Thermococcus kodakarensis (strain ATCC BAA-918 / JCM 12380 / KOD1) (Pyrococcus kodakaraensis (strain KOD1)).